Reading from the N-terminus, the 226-residue chain is 26S proteasome non-ATPase regulatory subunit 10 (226 aa).

The segment at M1–D37 is required for nuclear localization. Positions M1 to D71 are interaction with RB1. 7 ANK repeats span residues G3–T36, D37–K69, D70–V102, N103–K135, D136–Q168, D169–E201, and N202–G226. The interval D39 to G226 is interaction with RELA. The interval E171–G226 is interaction with RB1.

As to quaternary structure, part of transient complex containing PSMD10, PSMC4, PSMC5 and PAAF1 formed during the assembly of the 26S proteasome. Stays associated throughout the assembly of the PA700/19S RC and is released upon association with the 20S core. Interacts with PSMC4. Interacts with RB1. Interacts with CDK4. Interacts with MDM2. Interacts with RELA. Associates with a CDK4:CCND2 serine/threonine kinase complex. Interacts with ARHGDIA and increases the interaction between ARHGDIA and RHOA, hence promotes ARHGDIA inactivation of RHOA and ROCK. Tends to be up-regulated in cancer cells with RAS mutations, including lung cancers and adenocarconimas (at protein level).

It is found in the cytoplasm. It localises to the nucleus. In terms of biological role, acts as a chaperone during the assembly of the 26S proteasome, specifically of the PA700/19S regulatory complex (RC). In the initial step of the base subcomplex assembly is part of an intermediate PSMD10:PSMC4:PSMC5:PAAF1 module which probably assembles with a PSMD5:PSMC2:PSMC1:PSMD2 module. Independently of the proteasome, regulates EGF-induced AKT activation through inhibition of the RHOA/ROCK/PTEN pathway, leading to prolonged AKT activation. Plays an important role in RAS-induced tumorigenesis. Functionally, acts as an proto-oncoprotein by being involved in negative regulation of tumor suppressors RB1 and p53/TP53. Overexpression is leading to phosphorylation of RB1 and proteasomal degradation of RB1. Regulates CDK4-mediated phosphorylation of RB1 by competing with CDKN2A for binding with CDK4. Facilitates binding of MDM2 to p53/TP53 and the mono- and polyubiquitination of p53/TP53 by MDM2 suggesting a function in targeting the TP53:MDM2 complex to the 26S proteasome. Involved in p53-independent apoptosis. Involved in regulation of NF-kappa-B by retaining it in the cytoplasm. Binds to the NF-kappa-B component RELA and accelerates its XPO1/CRM1-mediated nuclear export. The chain is 26S proteasome non-ATPase regulatory subunit 10 (PSMD10) from Homo sapiens (Human).